Reading from the N-terminus, the 1047-residue chain is Error-prone DNA polymerase (1047 aa).

This sequence belongs to the DNA polymerase type-C family. DnaE2 subfamily.

The protein localises to the cytoplasm. It carries out the reaction DNA(n) + a 2'-deoxyribonucleoside 5'-triphosphate = DNA(n+1) + diphosphate. In terms of biological role, DNA polymerase involved in damage-induced mutagenesis and translesion synthesis (TLS). It is not the major replicative DNA polymerase. The protein is Error-prone DNA polymerase of Methylococcus capsulatus (strain ATCC 33009 / NCIMB 11132 / Bath).